Here is a 164-residue protein sequence, read N- to C-terminus: Large ribosomal subunit protein uL15 (164 aa).

A compositionally biased stretch (polar residues) spans 1-14; it reads MKLNEIQDNPGSSK. The interval 1-35 is disordered; sequence MKLNEIQDNPGSSKSRMRVGRGIGSGKGKTCGRGV. Over residues 21–35 the composition is skewed to gly residues; sequence RGIGSGKGKTCGRGV.

Belongs to the universal ribosomal protein uL15 family. Part of the 50S ribosomal subunit.

Binds to the 23S rRNA. The sequence is that of Large ribosomal subunit protein uL15 from Methylocella silvestris (strain DSM 15510 / CIP 108128 / LMG 27833 / NCIMB 13906 / BL2).